Here is a 318-residue protein sequence, read N- to C-terminus: Ficolin-1-B (318 aa).

The first 19 residues, M1 to A19, serve as a signal peptide directing secretion. Residues G42 to G99 enclose the Collagen-like domain. The 219-residue stretch at I100–P318 folds into the Fibrinogen C-terminal domain. A disulfide bond links C109 and C137. N-linked (GlcNAc...) asparagine glycans are attached at residues N205 and N222. Residue D253 coordinates Ca(2+). N254 carries N-linked (GlcNAc...) asparagine glycosylation. Ca(2+) is bound by residues D255 and S257. C261 and C274 form a disulfide bridge. S273–H275 contacts a carbohydrate. N287 carries N-linked (GlcNAc...) asparagine glycosylation.

This sequence belongs to the ficolin lectin family. As to quaternary structure, homotrimer. May form higher-order oligomers. In terms of processing, N-glycosylated. As to expression, expressed in peripheral blood leukocytes. Also detected at lower levels in spleen and lung.

Its subcellular location is the secreted. May function in innate immunity through activation of the lectin complement pathway. Binds to GalNAc and GlcNAc carbohydrate moieties. The polypeptide is Ficolin-1-B (Xenopus laevis (African clawed frog)).